The following is a 278-amino-acid chain: Elongation factor Ts (278 aa).

The tract at residues 82-85 (TDFV) is involved in Mg(2+) ion dislocation from EF-Tu.

It belongs to the EF-Ts family.

The protein resides in the cytoplasm. Functionally, associates with the EF-Tu.GDP complex and induces the exchange of GDP to GTP. It remains bound to the aminoacyl-tRNA.EF-Tu.GTP complex up to the GTP hydrolysis stage on the ribosome. This chain is Elongation factor Ts (tsf), found in Streptomyces ramocissimus.